A 354-amino-acid chain; its full sequence is Lysine racemase (354 aa).

K36 carries the N6-(pyridoxal phosphate)lysine modification.

The protein belongs to the alanine racemase family. As to quaternary structure, homodimer. Pyridoxal 5'-phosphate serves as cofactor.

The enzyme catalyses L-lysine = D-lysine. It catalyses the reaction L-ornithine = D-ornithine. It functions in the pathway cell wall biogenesis; peptidoglycan biosynthesis. Functionally, catalyzes the interconversion of D-lysine and L-lysine. Has also high activity toward ornithine, and weaker activity toward alanine. Contributes to production of D-lysine and D-alanine for use as peptidoglycan components. This Thermotoga maritima (strain ATCC 43589 / DSM 3109 / JCM 10099 / NBRC 100826 / MSB8) protein is Lysine racemase.